Here is a 425-residue protein sequence, read N- to C-terminus: Histidine--tRNA ligase (425 aa).

It belongs to the class-II aminoacyl-tRNA synthetase family. Homodimer.

The protein resides in the cytoplasm. It catalyses the reaction tRNA(His) + L-histidine + ATP = L-histidyl-tRNA(His) + AMP + diphosphate + H(+). The protein is Histidine--tRNA ligase of Listeria monocytogenes serovar 1/2a (strain ATCC BAA-679 / EGD-e).